The primary structure comprises 88 residues: Exodeoxyribonuclease 7 small subunit (88 aa).

A disordered region spans residues 69-88 (DPMRPDDGEPFDPSIVSTSQ).

The protein belongs to the XseB family. In terms of assembly, heterooligomer composed of large and small subunits.

Its subcellular location is the cytoplasm. The enzyme catalyses Exonucleolytic cleavage in either 5'- to 3'- or 3'- to 5'-direction to yield nucleoside 5'-phosphates.. Bidirectionally degrades single-stranded DNA into large acid-insoluble oligonucleotides, which are then degraded further into small acid-soluble oligonucleotides. This chain is Exodeoxyribonuclease 7 small subunit, found in Xylella fastidiosa (strain M12).